The sequence spans 485 residues: Inosine-5'-monophosphate dehydrogenase (485 aa).

2 consecutive CBS domains span residues 99–154 and 156–215; these read IVED…LVKE and MTKD…VRDE. NAD(+) is bound by residues Asp-247 and 294–296; that span reads GIG. Residues Gly-296 and Gly-298 each coordinate K(+). Residue Ser-299 coordinates IMP. Cys-301 is a K(+) binding site. Residue Cys-301 is the Thioimidate intermediate of the active site. IMP is bound by residues 334–336, 357–358, and 381–385; these read DGG, GN, and YRGMG. Arg-397 functions as the Proton acceptor in the catalytic mechanism. Position 412 (Glu-412) interacts with IMP. Residues Glu-466, Ser-467, and His-468 each coordinate K(+).

It belongs to the IMPDH/GMPR family. As to quaternary structure, homotetramer. K(+) is required as a cofactor.

The enzyme catalyses IMP + NAD(+) + H2O = XMP + NADH + H(+). Its pathway is purine metabolism; XMP biosynthesis via de novo pathway; XMP from IMP: step 1/1. Mycophenolic acid (MPA) is a non-competitive inhibitor that prevents formation of the closed enzyme conformation by binding to the same site as the amobile flap. In contrast, mizoribine monophosphate (MZP) is a competitive inhibitor that induces the closed conformation. MPA is a potent inhibitor of mammalian IMPDHs but a poor inhibitor of the bacterial enzymes. MZP is a more potent inhibitor of bacterial IMPDH. Functionally, catalyzes the conversion of inosine 5'-phosphate (IMP) to xanthosine 5'-phosphate (XMP), the first committed and rate-limiting step in the de novo synthesis of guanine nucleotides, and therefore plays an important role in the regulation of cell growth. This is Inosine-5'-monophosphate dehydrogenase from Pyrococcus abyssi (strain GE5 / Orsay).